A 55-amino-acid polypeptide reads, in one-letter code: ATP synthase F(0) complex subunit 8 (55 aa).

A helical membrane pass occupies residues 4 to 24 (LNPAPWFAILVFSWLVFLTVI). Positions 34–55 (TNEPTSQSTEKAKPEPWNWPWH) are disordered.

It belongs to the ATPase protein 8 family. As to quaternary structure, component of the ATP synthase complex composed at least of ATP5F1A/subunit alpha, ATP5F1B/subunit beta, ATP5MC1/subunit c (homooctomer), MT-ATP6/subunit a, MT-ATP8/subunit 8, ATP5ME/subunit e, ATP5MF/subunit f, ATP5MG/subunit g, ATP5MK/subunit k, ATP5MJ/subunit j, ATP5F1C/subunit gamma, ATP5F1D/subunit delta, ATP5F1E/subunit epsilon, ATP5PF/subunit F6, ATP5PB/subunit b, ATP5PD/subunit d, ATP5PO/subunit OSCP. ATP synthase complex consists of a soluble F(1) head domain (subunits alpha(3) and beta(3)) - the catalytic core - and a membrane F(0) domain - the membrane proton channel (subunits c, a, 8, e, f, g, k and j). These two domains are linked by a central stalk (subunits gamma, delta, and epsilon) rotating inside the F1 region and a stationary peripheral stalk (subunits F6, b, d, and OSCP).

It is found in the mitochondrion membrane. Subunit 8, of the mitochondrial membrane ATP synthase complex (F(1)F(0) ATP synthase or Complex V) that produces ATP from ADP in the presence of a proton gradient across the membrane which is generated by electron transport complexes of the respiratory chain. ATP synthase complex consist of a soluble F(1) head domain - the catalytic core - and a membrane F(1) domain - the membrane proton channel. These two domains are linked by a central stalk rotating inside the F(1) region and a stationary peripheral stalk. During catalysis, ATP synthesis in the catalytic domain of F(1) is coupled via a rotary mechanism of the central stalk subunits to proton translocation. In vivo, can only synthesize ATP although its ATP hydrolase activity can be activated artificially in vitro. Part of the complex F(0) domain. The protein is ATP synthase F(0) complex subunit 8 of Oncorhynchus mykiss (Rainbow trout).